The following is a 743-amino-acid chain: Isocitrate dehydrogenase [NADP] 2 (743 aa).

Residues asparagine 87 and serine 89 each contribute to the NADP(+) site. D-threo-isocitrate is bound by residues serine 134, asparagine 137, arginine 141, arginine 147, and lysine 257. An NADP(+)-binding site is contributed by asparagine 137. Residue aspartate 352 participates in Mg(2+) binding. D-threo-isocitrate-binding residues include tyrosine 422 and arginine 549. Mg(2+) is bound by residues aspartate 550 and aspartate 554. Residues serine 587, histidine 591, arginine 602, aspartate 604, and arginine 651 each coordinate NADP(+).

This sequence belongs to the monomeric-type IDH family. Monomer. Mg(2+) serves as cofactor. Mn(2+) is required as a cofactor.

The enzyme catalyses D-threo-isocitrate + NADP(+) = 2-oxoglutarate + CO2 + NADPH. Its function is as follows. Catalyzes the oxidative decarboxylation of isocitrate to 2-oxoglutarate and carbon dioxide with the concomitant reduction of NADP(+). The protein is Isocitrate dehydrogenase [NADP] 2 (icd2) of Colwellia maris.